We begin with the raw amino-acid sequence, 424 residues long: MEAVYLVVNGVGLVLDLLTLMLDLNFLLVSSLLATLAWLLAFIYNLPHTVLTSLLHLGRGFLLSLLALVEAVVRFTFGGLQALGTLLYSCYSGLESLKLLGHLASHGALRSREFLNRGILNMVSNGHALLRQACDICAIAMSLVAYVINSLVNICLISTQNFFSLVLALWDAVTGPLWRMTDVVAAFLAHISSSAVAMAILLWTPCQLALELLASAARLLASCVVFHLTGLVLLACVLAVILIVLHPEQTLRLATQALSQLHARPSYHRLWEDIVRLTRLPLGLEAWRRVWSRSLQLASWPNRGGAPGAPQGGPRRVFSARIQPQDTPPEAEEEVIRTAPARGREQLNEDEPAAGQDPWKLLKEQEERKKCVICQDQSKTVLLLPCRHLCLCQACTEILMRHPVYHRNCPLCRRSILQTLNVYL.

The next 5 helical transmembrane spans lie at 24–44 (LNFL…AFIY), 60–80 (GFLL…FGGL), 157–177 (ISTQ…TGPL), 183–203 (VVAA…ILLW), and 224–244 (VVFH…ILIV). The RING-type zinc finger occupies 371 to 413 (CVICQDQSKTVLLLPCRHLCLCQACTEILMRHPVYHRNCPLCR).

As to quaternary structure, interacts with INCA1. Interacts with TMEM43, ENDOD1, TMEM33 and TMED1 to form a complex capable of modulating innate immune signaling through the cGAS-STING pathway. Interacts with UBE2J1; this interaction is important for SQSTM1 ubiquitination.

Its subcellular location is the endoplasmic reticulum membrane. It carries out the reaction S-ubiquitinyl-[E2 ubiquitin-conjugating enzyme]-L-cysteine + [acceptor protein]-L-lysine = [E2 ubiquitin-conjugating enzyme]-L-cysteine + N(6)-ubiquitinyl-[acceptor protein]-L-lysine.. It functions in the pathway protein modification; protein ubiquitination. E3 ubiquitin-protein ligase that plays a key role in endosome organization by retaining vesicles in the perinuclear cloud. Acts as a platform for perinuclear positioning of the endosomal system by mediating ubiquitination of SQSTM1 through interaction with the ubiquitin conjugating enzyme UBE2J1. Ubiquitinated SQSTM1 attracts specific vesicle-associated adapters, forming a molecular bridge that restrains cognate vesicles in the perinuclear region and organizes the endosomal pathway for efficient cargo transport. Also acts as a regulator of type I interferon production in response to viral infection by mediating the formation of 'Lys-11'-linked polyubiquitin chains on TMEM173/STING, leading to stabilize TMEM173/STING. Also required to limit type I interferon response by promoting autophagic degradation of IRF3. This chain is E3 ubiquitin-protein ligase RNF26, found in Mus musculus (Mouse).